Here is a 346-residue protein sequence, read N- to C-terminus: Hydroxyproline O-galactosyltransferase HPGT3 (346 aa).

Residues 1–10 (MESLPTTVPS) are compositionally biased toward polar residues. The interval 1 to 21 (MESLPTTVPSKSERRARSSKF) is disordered. Topologically, residues 1 to 28 (MESLPTTVPSKSERRARSSKFSQSSSKP) are cytoplasmic. Residues 29-45 (SVIMAFFSCVAWLYVAG) traverse the membrane as a helical; Signal-anchor for type II membrane protein segment. The Lumenal portion of the chain corresponds to 46–346 (RLWQDAENRV…IRQDKVCSVA (301 aa)).

This sequence belongs to the glycosyltransferase 31 family. Requires Mn(2+) as cofactor. As to expression, expressed in roots, rosette leaves, cauline leaves, stems, flowers and siliques.

Its subcellular location is the golgi apparatus membrane. The protein operates within protein modification; protein glycosylation. Possesses hydroxyproline O-galactosyltransferase activity. Transfers galactose from UDP-galactose to hydroxyproline residues in the arabinogalactan proteins (AGPs). Is specific for AGPs containing non-contiguous peptidyl hydroxyproline residues. The addition of galactose onto the peptidyl hydroxyproline residues in AGP core proteins represents the first committed step in arabinogalactan polysaccharide addition. AGP glycans play essential roles in both vegetative and reproductive plant growth. This chain is Hydroxyproline O-galactosyltransferase HPGT3, found in Arabidopsis thaliana (Mouse-ear cress).